A 163-amino-acid chain; its full sequence is Homoaconitase small subunit (163 aa).

This sequence belongs to the LeuD family. Heterodimer of HacA and HacB.

It carries out the reaction (2R,3S)-homoisocitrate = cis-homoaconitate + H2O. The protein operates within amino-acid biosynthesis; L-lysine biosynthesis via AAA pathway; L-alpha-aminoadipate from 2-oxoglutarate: step 3/5. Is not inhibited by lysine. Its function is as follows. Catalyzes the reversible hydration of cis-homoaconitate ((Z)-but-1-ene-1,2,4-tricarboxylate) to homoisocitrate ((1R,2S)-1-hydroxybutane-1,2,4-tricarboxylate). Can catalyze neither the dehydration of (R)-homocitrate ((2R)-2-hydroxybutane-1,2,4-tricarboxylate) into cis-homoaconitate in vitro, nor the reverse reaction. Is not active toward (S)-homocitrate, cis-aconitate or citrate as substrate. The sequence is that of Homoaconitase small subunit (hacB) from Thermus thermophilus (strain ATCC BAA-163 / DSM 7039 / HB27).